Here is a 243-residue protein sequence, read N- to C-terminus: Probable transcriptional regulatory protein Smal_3128 (243 aa).

Belongs to the TACO1 family.

Its subcellular location is the cytoplasm. The chain is Probable transcriptional regulatory protein Smal_3128 from Stenotrophomonas maltophilia (strain R551-3).